Here is a 303-residue protein sequence, read N- to C-terminus: Hemolysin E (303 aa).

C87 and C285 form a disulfide bridge. The chain crosses the membrane as a helical span at residues 183-203 (AGVVAGPFGLIISYSIAAGVV).

This sequence belongs to the hemolysin E family. In terms of assembly, monomer and oligomer. In periplasm, it is present as a monomer, while in outer membrane vesicles, it oligomerizes to form a pore structure that is active. The pore is formed by a dodecamer. In terms of processing, in periplasm, it forms a disulfide bond, which prevents the oligomerization. In outer membrane vesicles, the redox status prevents formation of the disulfide bond, leading to oligomerization and pore formation.

Its subcellular location is the secreted. The protein resides in the periplasm. The protein localises to the host cell membrane. Its function is as follows. Toxin, which has some hemolytic activity towards mammalian cells. Acts by forming a pore-like structure upon contact with mammalian cells. The protein is Hemolysin E (hlyE) of Escherichia coli O157:H7.